The primary structure comprises 350 residues: Probable aldo-keto reductase 1 (350 aa).

Residue Y67 is the Proton donor of the active site. Position 135 (H135) interacts with substrate. Residue 214–224 coordinates NADP(+); sequence SPLGKGFFSSG.

This sequence belongs to the aldo/keto reductase family.

This is Probable aldo-keto reductase 1 from Oryza sativa subsp. indica (Rice).